The following is a 323-amino-acid chain: Transcription factor MYB108 (323 aa).

2 consecutive HTH myb-type domains span residues Glu-16–Leu-68 and Arg-69–Ala-123. 2 consecutive DNA-binding regions (H-T-H motif) follow at residues Trp-44–Leu-68 and Trp-96–Val-119.

As to quaternary structure, interacts with BOI, but not with BRG1. Post-translationally, ubiquitinated in vitro by BOI. As to expression, expressed specifically in flowers. Restricted to anthers in maturing flowers. Strongest expression in the vascular and connective tissue where the anther attaches to the filament. Not detected in pollen.

The protein resides in the nucleus. Its function is as follows. Transcription factor contributing to the regulation of stamen maturation and male fertility in response to jasmonate signaling. Required for correct timing of anther dehiscence. Acts as a negative regulator of abscisic acid-induced cell death. Not involved in the regulation of BOI. Regulated by MYB21 and at a lower level by MYB24. Negatively regulated by the proteasome in an SCF(COI1) E3 ubiquitin-protein ligase complex-dependent manner. This chain is Transcription factor MYB108 (MYB108), found in Arabidopsis thaliana (Mouse-ear cress).